A 332-amino-acid chain; its full sequence is Ribosomal RNA small subunit methyltransferase H (332 aa).

S-adenosyl-L-methionine contacts are provided by residues 42 to 44, D62, F86, D105, and Q112; that span reads GGH.

Belongs to the methyltransferase superfamily. RsmH family.

It localises to the cytoplasm. It catalyses the reaction cytidine(1402) in 16S rRNA + S-adenosyl-L-methionine = N(4)-methylcytidine(1402) in 16S rRNA + S-adenosyl-L-homocysteine + H(+). Specifically methylates the N4 position of cytidine in position 1402 (C1402) of 16S rRNA. This chain is Ribosomal RNA small subunit methyltransferase H, found in Cupriavidus pinatubonensis (strain JMP 134 / LMG 1197) (Cupriavidus necator (strain JMP 134)).